A 130-amino-acid chain; its full sequence is DNA-directed RNA polymerase subunit omega (130 aa).

2 disordered regions span residues 79-98 (EPEP…VDAD) and 109-130 (EEEL…EEDE).

The protein belongs to the RNA polymerase subunit omega family. In terms of assembly, the RNAP catalytic core consists of 2 alpha, 1 beta, 1 beta' and 1 omega subunit. When a sigma factor is associated with the core the holoenzyme is formed, which can initiate transcription.

It carries out the reaction RNA(n) + a ribonucleoside 5'-triphosphate = RNA(n+1) + diphosphate. Promotes RNA polymerase assembly. Latches the N- and C-terminal regions of the beta' subunit thereby facilitating its interaction with the beta and alpha subunits. This is DNA-directed RNA polymerase subunit omega (rpoZ) from Bradyrhizobium diazoefficiens (strain JCM 10833 / BCRC 13528 / IAM 13628 / NBRC 14792 / USDA 110).